The sequence spans 162 residues: Necrosis-inducing secreted protein 1 (162 aa).

Residues 1-19 (MQFLTSLAAAASLVSLASA) form the signal peptide. 4 N-linked (GlcNAc...) asparagine glycosylation sites follow: asparagine 88, asparagine 126, asparagine 133, and asparagine 150. A BAK1/SERK3-binding region spans residues 103 to 132 (EYVIAASLFSLYGASSSPTVSNYNVTVNVG).

This sequence belongs to the NIS1 effector family. As to quaternary structure, interacts with the host pattern recognition receptor (PRR)-associated kinases BAK1/SERK3, BKK1/SERK4 and BIK1.

It is found in the secreted. Its subcellular location is the host cytoplasm. Functionally, secreted effector that induces necrotic lesions in Nicotiana benthamiana. Interacts with the host receptor-like kinases (RLKs) BAK1/SERK3 and BKK1/SERK4, inhibits their kinase activity and suppresses INF1-induced pathogen-associated molecular pattern (PAMP)-triggered immunity (PTI) in N.benthamiana. Also interacts with the host receptor-like cytoplasmic kinase (RLCK) BIK1 and inhibits its kinase activity, thereby inhibiting PAMP-induced ROS generation. In PTI, phosphorylation relaying by RLKs and RLCKs is critical for the initiation of downstream signaling. In Colletotrichum orbiculare (strain 104-T / ATCC 96160 / CBS 514.97 / LARS 414 / MAFF 240422) (Cucumber anthracnose fungus), this protein is Necrosis-inducing secreted protein 1.